Here is a 185-residue protein sequence, read N- to C-terminus: Inner membrane-spanning protein YciB (185 aa).

Transmembrane regions (helical) follow at residues 27–47, 53–73, 76–96, 118–138, and 149–169; these read IVLV…YGIV, IMAS…EIRY, WKVT…QFQF, TLNL…IYIS, and FKSF…GVYI.

It belongs to the YciB family.

Its subcellular location is the cell inner membrane. Plays a role in cell envelope biogenesis, maintenance of cell envelope integrity and membrane homeostasis. In Haemophilus influenzae (strain 86-028NP), this protein is Inner membrane-spanning protein YciB.